Reading from the N-terminus, the 369-residue chain is Histidinol-phosphate aminotransferase 2 (369 aa).

Position 229 is an N6-(pyridoxal phosphate)lysine (Lys-229).

Belongs to the class-II pyridoxal-phosphate-dependent aminotransferase family. Histidinol-phosphate aminotransferase subfamily. Homodimer. Pyridoxal 5'-phosphate serves as cofactor.

The catalysed reaction is L-histidinol phosphate + 2-oxoglutarate = 3-(imidazol-4-yl)-2-oxopropyl phosphate + L-glutamate. It participates in amino-acid biosynthesis; L-histidine biosynthesis; L-histidine from 5-phospho-alpha-D-ribose 1-diphosphate: step 7/9. This chain is Histidinol-phosphate aminotransferase 2 (hisC2), found in Pseudomonas aeruginosa (strain ATCC 15692 / DSM 22644 / CIP 104116 / JCM 14847 / LMG 12228 / 1C / PRS 101 / PAO1).